A 284-amino-acid chain; its full sequence is Release factor glutamine methyltransferase (284 aa).

Residues 123–127, Asp-146, Trp-174, and Asn-189 each bind S-adenosyl-L-methionine; that span reads GTGTG. A substrate-binding site is contributed by 189-192; it reads NPPY.

The protein belongs to the protein N5-glutamine methyltransferase family. PrmC subfamily.

It carries out the reaction L-glutaminyl-[peptide chain release factor] + S-adenosyl-L-methionine = N(5)-methyl-L-glutaminyl-[peptide chain release factor] + S-adenosyl-L-homocysteine + H(+). In terms of biological role, methylates the class 1 translation termination release factors RF1/PrfA and RF2/PrfB on the glutamine residue of the universally conserved GGQ motif. In Francisella tularensis subsp. tularensis (strain SCHU S4 / Schu 4), this protein is Release factor glutamine methyltransferase.